We begin with the raw amino-acid sequence, 114 residues long: Cytokine SCM-1 beta (114 aa).

An N-terminal signal peptide occupies residues 1-21 (MRLLILALLGICSLTAYIVEG). Cysteine 32 and cysteine 69 are oxidised to a cystine. The disordered stretch occupies residues 91 to 114 (RNNMIQTKPTGTQQSTNTAVTLTG).

Belongs to the intercrine gamma family.

The protein localises to the secreted. In terms of biological role, chemotactic activity for lymphocytes but not for monocytes or neutrophils. In Homo sapiens (Human), this protein is Cytokine SCM-1 beta (XCL2).